Reading from the N-terminus, the 234-residue chain is Probable GTP-binding protein EngB (234 aa).

The EngB-type G domain maps to 23-209 (AVPEVAFAGR…QRTVAGWLCL (187 aa)). Residues 31 to 38 (GRSNAGKS), 58 to 62 (GRTQH), 82 to 85 (DLPG), 149 to 152 (TKAD), and 187 to 190 (LFSS) each bind GTP. Positions 38 and 60 each coordinate Mg(2+). Positions 210–234 (PEAMPPSPDAEPAKKTPSPDAQRGE) are disordered.

The protein belongs to the TRAFAC class TrmE-Era-EngA-EngB-Septin-like GTPase superfamily. EngB GTPase family. It depends on Mg(2+) as a cofactor.

Necessary for normal cell division and for the maintenance of normal septation. The protein is Probable GTP-binding protein EngB of Ralstonia nicotianae (strain ATCC BAA-1114 / GMI1000) (Ralstonia solanacearum).